A 444-amino-acid chain; its full sequence is Probable glycolate oxidase iron-sulfur subunit (444 aa).

2 consecutive 4Fe-4S ferredoxin-type domains span residues 14–46 and 69–100; these read FKERMDEGELLNCMRCGFCLPSCPTYIESGFQE and EDVERSLSLCLGCRACEPVCPSGVKYGQLLEE. Positions 26, 29, 32, 36, 78, 81, 84, and 88 each coordinate [4Fe-4S] cluster.

The glycolate oxidase likely consists of several subunits including GlcD and GlcF. [4Fe-4S] cluster serves as cofactor.

It localises to the cell membrane. The catalysed reaction is glycolate + A = glyoxylate + AH2. It catalyses the reaction (R)-lactate + A = pyruvate + AH2. Functionally, component of a complex that catalyzes the oxidation of glycolate to glyoxylate. Is also able to oxidize D-lactate ((R)-lactate). Does not link directly to O(2), and 2,6-dichloroindophenol (DCIP) and phenazine methosulfate (PMS) can act as artificial electron acceptors in vitro, but the physiological molecule that functions as primary electron acceptor during glycolate oxidation is unknown. In Bacillus subtilis (strain 168), this protein is Probable glycolate oxidase iron-sulfur subunit (glcF).